We begin with the raw amino-acid sequence, 104 residues long: L-rhamnose mutarotase (104 aa).

Position 18 (Y18) interacts with substrate. H22 functions as the Proton donor in the catalytic mechanism. Residues Y41 and 76 to 77 each bind substrate; that span reads WW.

Belongs to the rhamnose mutarotase family. Homodimer.

It is found in the cytoplasm. The enzyme catalyses alpha-L-rhamnose = beta-L-rhamnose. The protein operates within carbohydrate metabolism; L-rhamnose metabolism. Involved in the anomeric conversion of L-rhamnose. This chain is L-rhamnose mutarotase, found in Listeria monocytogenes serotype 4b (strain F2365).